Consider the following 164-residue polypeptide: Transcriptional regulator MraZ (164 aa).

2 SpoVT-AbrB domains span residues 7–60 and 83–126; these read HYTN…EIDG and SEIL…EPGR. The segment at 144–164 is disordered; the sequence is QLSARHAAPDAPPLRSHGARE.

Belongs to the MraZ family. In terms of assembly, forms oligomers.

The protein resides in the cytoplasm. The protein localises to the nucleoid. This is Transcriptional regulator MraZ from Methylocella silvestris (strain DSM 15510 / CIP 108128 / LMG 27833 / NCIMB 13906 / BL2).